Here is a 585-residue protein sequence, read N- to C-terminus: Bifunctional purine biosynthesis protein ade10 (585 aa).

An MGS-like domain is found at 1–142 (MYALLSVYDK…KNHARVTILS (142 aa)). IMP-binding positions include 30–33 (SGGT), 60–63 (RVKT), 97–98 (CN), and 121–122 (DI). Lysine 133 (proton donor/acceptor; for FAICAR cyclization activity) is an active-site residue. Residues 200–201 (RY), histidine 260, glycine 308, aspartate 331, asparagine 423, and arginine 443 contribute to the 5-amino-1-(5-phospho-beta-D-ribosyl)imidazole-4-carboxamide site. The Proton acceptor; for AICAR formyltransferase activity role is filled by histidine 260. Isoleucine 444 lines the (6R)-10-formyltetrahydrofolate pocket. Phenylalanine 534 is a 5-amino-1-(5-phospho-beta-D-ribosyl)imidazole-4-carboxamide binding site. Residues aspartate 539 and 558-559 (SV) contribute to the (6R)-10-formyltetrahydrofolate site. Residue arginine 581 coordinates 5-amino-1-(5-phospho-beta-D-ribosyl)imidazole-4-carboxamide.

The protein belongs to the PurH family. As to quaternary structure, homodimer.

It localises to the cytoplasm. The protein localises to the cytosol. The enzyme catalyses (6R)-10-formyltetrahydrofolate + 5-amino-1-(5-phospho-beta-D-ribosyl)imidazole-4-carboxamide = 5-formamido-1-(5-phospho-D-ribosyl)imidazole-4-carboxamide + (6S)-5,6,7,8-tetrahydrofolate. The catalysed reaction is IMP + H2O = 5-formamido-1-(5-phospho-D-ribosyl)imidazole-4-carboxamide. Its pathway is purine metabolism; IMP biosynthesis via de novo pathway; 5-formamido-1-(5-phospho-D-ribosyl)imidazole-4-carboxamide from 5-amino-1-(5-phospho-D-ribosyl)imidazole-4-carboxamide (10-formyl THF route): step 1/1. It participates in purine metabolism; IMP biosynthesis via de novo pathway; IMP from 5-formamido-1-(5-phospho-D-ribosyl)imidazole-4-carboxamide: step 1/1. Bifunctional enzyme that catalyzes the last two steps of purine biosynthesis. Acts as a transformylase that incorporates a formyl group to the AMP analog AICAR (5-amino-1-(5-phospho-beta-D-ribosyl)imidazole-4-carboxamide) to produce the intermediate formyl-AICAR (FAICAR). Also catalyzes the cyclization of FAICAR to IMP. The protein is Bifunctional purine biosynthesis protein ade10 (ade10) of Schizosaccharomyces pombe (strain 972 / ATCC 24843) (Fission yeast).